A 180-amino-acid chain; its full sequence is Cell division protein ZapC (180 aa).

Belongs to the ZapC family. As to quaternary structure, interacts directly with FtsZ.

It localises to the cytoplasm. Functionally, contributes to the efficiency of the cell division process by stabilizing the polymeric form of the cell division protein FtsZ. Acts by promoting interactions between FtsZ protofilaments and suppressing the GTPase activity of FtsZ. The sequence is that of Cell division protein ZapC from Vibrio cholerae serotype O1 (strain ATCC 39315 / El Tor Inaba N16961).